The following is a 272-amino-acid chain: Acetylglutamate kinase (272 aa).

Substrate-binding positions include 41–42 (GG), Arg-63, and Asn-166.

This sequence belongs to the acetylglutamate kinase family. ArgB subfamily.

It is found in the cytoplasm. It catalyses the reaction N-acetyl-L-glutamate + ATP = N-acetyl-L-glutamyl 5-phosphate + ADP. The protein operates within amino-acid biosynthesis; L-arginine biosynthesis; N(2)-acetyl-L-ornithine from L-glutamate: step 2/4. Catalyzes the ATP-dependent phosphorylation of N-acetyl-L-glutamate. This is Acetylglutamate kinase from Anaeromyxobacter sp. (strain K).